The primary structure comprises 572 residues: Phosphoenolpyruvate-protein phosphotransferase (572 aa).

H191 acts as the Tele-phosphohistidine intermediate in catalysis. Residues R298 and R334 each contribute to the phosphoenolpyruvate site. Mg(2+)-binding residues include E433 and D457. Residues 456–457 (ND) and R467 contribute to the phosphoenolpyruvate site. The Proton donor role is filled by C504.

It belongs to the PEP-utilizing enzyme family. Homodimer. It depends on Mg(2+) as a cofactor.

It is found in the cytoplasm. It catalyses the reaction L-histidyl-[protein] + phosphoenolpyruvate = N(pros)-phospho-L-histidyl-[protein] + pyruvate. In terms of biological role, general (non sugar-specific) component of the phosphoenolpyruvate-dependent sugar phosphotransferase system (sugar PTS). This major carbohydrate active-transport system catalyzes the phosphorylation of incoming sugar substrates concomitantly with their translocation across the cell membrane. Enzyme I transfers the phosphoryl group from phosphoenolpyruvate (PEP) to the phosphoryl carrier protein (HPr). The polypeptide is Phosphoenolpyruvate-protein phosphotransferase (ptsI) (Staphylococcus epidermidis (strain ATCC 35984 / DSM 28319 / BCRC 17069 / CCUG 31568 / BM 3577 / RP62A)).